The chain runs to 482 residues: MFLFVETIRPQQRGESLLETVIKVVPGERFTPYGLALKLGARVVLESSSSKKGRDRYSLLLLQEAFRVAQEGTEVYFVKDGRRSKVKANHRDILDVLMYFARQHSDPGQDFPFPAGGVGYLSFEFCRYCDTIHLNPAKPDPLELPDALFLFGHVFLIYDHYTDLIYLVGLNYKEASIDLEAALAAVEARVNDGDWSALGSVGAPYDAEVLPQDYDPDETYKANVGAMRQEVIAGNLLQGVPSRRLLVKTEMPAIEAYRRLRSSNPSPYMFYLDFGDYQLFRASPELHVKVKGGTAEIRPIAGTRRRGATDAEDRALEAELLADVKERAEHLMLVDLARNDLGRICQPGTVQVKDSYFIERYSHVMHIVSSVEGRLKDDKTGIDALRASFPAGTVSGAPKIRAIEVIDRLEPVQRRFYSGVVGHLSPDGSLDTCIAIRSALKKGDTMVLQAGGGIVFDSNPDRELEETYEKMRATARSLGLEI.

Residues serine 47 and 267–269 (PYM) each bind L-tryptophan. A chorismate-binding site is contributed by 302-303 (GT). Glutamate 329 lines the Mg(2+) pocket. Chorismate is bound by residues tyrosine 417, arginine 437, 451 to 453 (GGG), and glycine 453. Mg(2+) is bound at residue glutamate 466.

Belongs to the anthranilate synthase component I family. Heterotetramer consisting of two non-identical subunits: a beta subunit (TrpG) and a large alpha subunit (TrpE). The cofactor is Mg(2+).

It carries out the reaction chorismate + L-glutamine = anthranilate + pyruvate + L-glutamate + H(+). The protein operates within amino-acid biosynthesis; L-tryptophan biosynthesis; L-tryptophan from chorismate: step 1/5. With respect to regulation, feedback inhibited by tryptophan. Its function is as follows. Part of a heterotetrameric complex that catalyzes the two-step biosynthesis of anthranilate, an intermediate in the biosynthesis of L-tryptophan. In the first step, the glutamine-binding beta subunit (TrpG) of anthranilate synthase (AS) provides the glutamine amidotransferase activity which generates ammonia as a substrate that, along with chorismate, is used in the second step, catalyzed by the large alpha subunit of AS (TrpE) to produce anthranilate. In the absence of TrpG, TrpE can synthesize anthranilate directly from chorismate and high concentrations of ammonia. The sequence is that of Anthranilate synthase component 1 (trpE) from Spirochaeta aurantia.